Reading from the N-terminus, the 373-residue chain is Alanine racemase (373 aa).

Residue K40 is the Proton acceptor; specific for D-alanine of the active site. K40 is modified (N6-(pyridoxal phosphate)lysine). Position 140 (R140) interacts with substrate. The Proton acceptor; specific for L-alanine role is filled by Y268. M315 serves as a coordination point for substrate.

Belongs to the alanine racemase family. The cofactor is pyridoxal 5'-phosphate.

It catalyses the reaction L-alanine = D-alanine. The protein operates within amino-acid biosynthesis; D-alanine biosynthesis; D-alanine from L-alanine: step 1/1. Its function is as follows. Catalyzes the interconversion of L-alanine and D-alanine. May also act on other amino acids. This Limosilactobacillus fermentum (strain NBRC 3956 / LMG 18251) (Lactobacillus fermentum) protein is Alanine racemase (alr).